The primary structure comprises 173 residues: MSRSKVFFDITIGGKASGRIVMELYDDVVPKTAGNFRALCTGENGIGKSGKPLHFKGSKFHRIIPNFMIQGGDFTRGNGTGGESIYGEKFPDENFKEKHTGPGVLSMANAGPNTNGSQFFLCTVKTEWLDGKHVVFGRVVEGLDVVKAVESNGSQSGKPVKDCMIADCGQLKA.

The PPIase cyclophilin-type domain maps to 7 to 170 (FFDITIGGKA…KDCMIADCGQ (164 aa)).

The protein belongs to the cyclophilin-type PPIase family. Exclusively expressed in the single anterior excretory cell.

It catalyses the reaction [protein]-peptidylproline (omega=180) = [protein]-peptidylproline (omega=0). Its function is as follows. Catalyzes the cis-trans isomerization of proline imidic peptide bonds in oligopeptides. Plays a role in protein folding, transport and assembly. The sequence is that of Peptidyl-prolyl cis-trans isomerase 3 (cyn-3) from Caenorhabditis elegans.